Reading from the N-terminus, the 240-residue chain is Fimbriae Y protein (240 aa).

Its subcellular location is the fimbrium. The sequence is that of Fimbriae Y protein (fimY) from Salmonella typhimurium (strain LT2 / SGSC1412 / ATCC 700720).